The chain runs to 475 residues: MNWTLALPEIVLALCGLAILVFGVVQKKEQPFLSCSMLTIGAFVLTGFLVVMSPDGVGYNHIFVNDDFARFMKILSLAGGAFATMLTVGYARNMKVERFEFPVLLLFSTLGAMMMASSENLMTLFIGLELSSLAIYILCAFARDEVRGGEAGLKYFVLGSLASGLLLYGSSLVYGYAGTMEYGGIQMALSTSSTAVPMGLMFGIVFMLAGLTFKLSAVPFHMWTPDVYQGAPTSVTAYMAGAPKFAAFALLLRVMAGPFGHVAPQWQILVEGVSMLSMLFGSLAAIPQTDIKRLMAYSSIGHMGYALMGLCAGTAEGMRGTLVYLTTYLLMNVGAFAVIIAMRRKGREVTGIADLAGLGKTDPGLATAMAIFMFSMAGAPPLAGFFGKMMVFYAAINAHLFGLAAIGVVSSVIGGYYYVRIVKVMFFDDAAAPLDRRPLSLSFVSVGMGIATTGFLLVLGPVSSAAQAAAQALFR.

Helical transmembrane passes span Leu-5 to Val-25, Phe-32 to Met-52, Phe-71 to Ala-91, Phe-99 to Glu-119, Leu-121 to Phe-141, Tyr-155 to Gly-175, Ser-193 to Phe-213, Pro-232 to Leu-252, Trp-266 to Ile-286, Leu-294 to Thr-314, Leu-322 to Met-342, Ala-366 to Phe-386, Met-389 to Val-409, and Leu-439 to Leu-459.

It belongs to the complex I subunit 2 family. In terms of assembly, NDH-1 is composed of 14 different subunits. Subunits NuoA, H, J, K, L, M, N constitute the membrane sector of the complex.

Its subcellular location is the cell inner membrane. It carries out the reaction a quinone + NADH + 5 H(+)(in) = a quinol + NAD(+) + 4 H(+)(out). Functionally, NDH-1 shuttles electrons from NADH, via FMN and iron-sulfur (Fe-S) centers, to quinones in the respiratory chain. The immediate electron acceptor for the enzyme in this species is believed to be ubiquinone. Couples the redox reaction to proton translocation (for every two electrons transferred, four hydrogen ions are translocated across the cytoplasmic membrane), and thus conserves the redox energy in a proton gradient. The polypeptide is NADH-quinone oxidoreductase subunit N (Gluconacetobacter diazotrophicus (strain ATCC 49037 / DSM 5601 / CCUG 37298 / CIP 103539 / LMG 7603 / PAl5)).